A 675-amino-acid polypeptide reads, in one-letter code: Neurexin-3b-beta (675 aa).

An N-terminal signal peptide occupies residues Met-1–Gly-30. The Extracellular segment spans residues Ser-31 to Thr-599. The Laminin G-like domain occupies Ala-81–Val-281. 2 disordered regions span residues Thr-313 to Ser-337 and Phe-490 to Arg-534. A compositionally biased stretch (polar residues) spans Ser-325–Ile-335. A helical membrane pass occupies residues Gly-600–Met-620. Residues Tyr-621 to Val-675 are Cytoplasmic-facing. Positions Asn-642–Val-675 are disordered. The span at Arg-665–Val-675 shows a compositional bias: basic and acidic residues.

It belongs to the neurexin family. In terms of processing, processed by alpha-secretase leading to the formation of an extracellular soluble protein as well as a C-terminal membrane-embedded fragment (CTF). Proteolysis of these CTFs by gamma-secretase releases intracellular domains (ICDs) and extracellular peptides.

The protein resides in the membrane. Its function is as follows. Neuronal cell surface protein that may be involved in cell recognition and cell adhesion. This Danio rerio (Zebrafish) protein is Neurexin-3b-beta (nrxn3b).